The sequence spans 640 residues: Pleckstrin homology-like domain family B member 3 (640 aa).

Disordered regions lie at residues 1-100 (MGTR…AARR), 162-189 (LEQQAASEQRGRQQREQEQRRLSQERDR), 241-262 (LERESRQEEEDRDSPGPQVPDP), 387-412 (GLQRTGSLPRKRGERGSQRGSPRPLS), and 476-504 (REGTRRGTEGSSGPAVPAITAPPTPPHPP). Residues 76-90 (PPIAMAATPPASTSS) show a composition bias toward low complexity. The stretch at 104-327 (QQLEALTRVA…ERSRLLELNC (224 aa)) forms a coiled coil. A compositionally biased stretch (basic and acidic residues) spans 170–189 (QRGRQQREQEQRRLSQERDR). A coiled-coil region spans residues 454-481 (DIAHMERLLQQAMAERERLLKAREGTRR). Over residues 495 to 504 (TAPPTPPHPP) the composition is skewed to pro residues. One can recognise a PH domain in the interval 532–635 (GCCCRGPLVK…WMDVIVTAAD (104 aa)).

This Homo sapiens (Human) protein is Pleckstrin homology-like domain family B member 3 (PHLDB3).